Here is a 630-residue protein sequence, read N- to C-terminus: Putative F-box/LRR-repeat protein At3g49150 (630 aa).

In terms of domain architecture, F-box spans 15-63; it reads KDIISDLPEALICHILSFLPIEDSALTSVLSKKWQHLFAFRPNLEFDDA. 9 LRR repeats span residues 101-129, 152-178, 180-205, 228-253, 300-325, 337-362, 406-436, 437-465, and 567-590; these read CRDFTDPTCVSRWISNVMERGVSDLDLRC, RIETGNGAFIDVEDVFLPNLKTLYLNK, LLRHSDNGFVKLITSCHVLEDLFIMN, CEDVHAVNPESVSFDTPNLVYFVYHD, ISNVQILELFANTIEVLTFCCEQIPV, DQKAGWESLPVLLKNCPDLESLIFDG, CDDYDDMEKQIELVMYFLETMPNLEEMKLFY, DTQIYEDVISKLQMDLRRTLSLRSLFNAR, and DSSIQLDFVQQIVHNVHSLTGLNW.

This Arabidopsis thaliana (Mouse-ear cress) protein is Putative F-box/LRR-repeat protein At3g49150.